Reading from the N-terminus, the 466-residue chain is ATP synthase subunit beta (466 aa).

155–162 (GGAGVGKT) is an ATP binding site.

The protein belongs to the ATPase alpha/beta chains family. As to quaternary structure, F-type ATPases have 2 components, CF(1) - the catalytic core - and CF(0) - the membrane proton channel. CF(1) has five subunits: alpha(3), beta(3), gamma(1), delta(1), epsilon(1). CF(0) has three main subunits: a(1), b(2) and c(9-12). The alpha and beta chains form an alternating ring which encloses part of the gamma chain. CF(1) is attached to CF(0) by a central stalk formed by the gamma and epsilon chains, while a peripheral stalk is formed by the delta and b chains.

It localises to the cell inner membrane. It carries out the reaction ATP + H2O + 4 H(+)(in) = ADP + phosphate + 5 H(+)(out). Functionally, produces ATP from ADP in the presence of a proton gradient across the membrane. The catalytic sites are hosted primarily by the beta subunits. This chain is ATP synthase subunit beta, found in Azoarcus sp. (strain BH72).